A 130-amino-acid polypeptide reads, in one-letter code: Ribonuclease P protein component 2 (130 aa).

This sequence belongs to the eukaryotic/archaeal RNase P protein component 2 family. As to quaternary structure, consists of a catalytic RNA component and at least 4-5 protein subunits.

Its subcellular location is the cytoplasm. It carries out the reaction Endonucleolytic cleavage of RNA, removing 5'-extranucleotides from tRNA precursor.. In terms of biological role, part of ribonuclease P, a protein complex that generates mature tRNA molecules by cleaving their 5'-ends. This chain is Ribonuclease P protein component 2, found in Methanococcus maripaludis (strain C5 / ATCC BAA-1333).